We begin with the raw amino-acid sequence, 155 residues long: Large ribosomal subunit protein eL24 (155 aa).

The interval 92–155 (AKRNMKPEVR…KAAPRVGGKR (64 aa)) is disordered. Residues 96–117 (MKPEVRKAQREQAIKQAKEQKK) are compositionally biased toward basic and acidic residues. Positions 124-133 (KTTAPPTKGK) are enriched in low complexity.

This sequence belongs to the eukaryotic ribosomal protein eL24 family.

The sequence is that of Large ribosomal subunit protein eL24 (RpL24) from Plutella xylostella (Diamondback moth).